A 417-amino-acid chain; its full sequence is Dibenzothiophene monooxygenase (417 aa).

Residues 19–125 (DPVAVARGLA…LYTQIAQNNW (107 aa)) form a helical N-terminus region. FMN-binding positions include Y96, 129 to 134 (NASSEN), 159 to 163 (KHFCS), R282, 369 to 370 (AR), and H391. The tract at residues 126-234 (WTGNASSENN…VEPDEVLGAP (109 aa)) is central beta-barrel N-terminus. Residues 131–142 (SSENNSHELDVK) are lid loop. The interval 235–409 (NAFVLAFIQS…DVGKHTLNGQ (175 aa)) is helical C-terminus.

The protein belongs to the DszC flavin monooxygenase family. In terms of assembly, homotetramer.

Its subcellular location is the cytoplasm. The catalysed reaction is dibenzothiophene + 2 FMNH2 + 2 O2 = dibenzothiophene 5,5-dioxide + 2 FMN + 2 H2O + 2 H(+). It carries out the reaction dibenzothiophene + FMNH2 + O2 = dibenzothiophene 5-oxide + FMN + H2O + H(+). It catalyses the reaction dibenzothiophene 5-oxide + FMNH2 + O2 = dibenzothiophene 5,5-dioxide + FMN + H2O + H(+). Its pathway is sulfur metabolism; dibenzothiophene degradation. Catalyzes the first step of the '4S' desulfurization pathway that removes covalently bound sulfur from dibenzothiophene (DBT) without breaking carbon-carbon bonds. Sulfur dioxygenase which converts DBT to DBT-sulfone (DBTO2 or DBT 5,5-dioxide) in a stepwise manner. This chain is Dibenzothiophene monooxygenase, found in Rhodococcus erythropolis (Arthrobacter picolinophilus).